The primary structure comprises 295 residues: Ribosomal protein L11 methyltransferase (295 aa).

S-adenosyl-L-methionine-binding residues include threonine 146, glycine 167, aspartate 189, and asparagine 231.

It belongs to the methyltransferase superfamily. PrmA family.

It localises to the cytoplasm. It carries out the reaction L-lysyl-[protein] + 3 S-adenosyl-L-methionine = N(6),N(6),N(6)-trimethyl-L-lysyl-[protein] + 3 S-adenosyl-L-homocysteine + 3 H(+). In terms of biological role, methylates ribosomal protein L11. This chain is Ribosomal protein L11 methyltransferase, found in Vibrio campbellii (strain ATCC BAA-1116).